Reading from the N-terminus, the 473-residue chain is Photosystem II CP43 reaction center protein (473 aa).

The propeptide occupies 1-14 (MKTLYSLRRFYPVE). N-acetylthreonine is present on Thr-15. Thr-15 is subject to Phosphothreonine. 5 helical membrane passes run 69–93 (LFEV…PHLA), 134–155 (LLGP…KDRN), 178–200 (KALY…RKIT), 255–275 (KPFA…LSYS), and 291–312 (WFNN…ASQA). Glu-367 is a binding site for [CaMn4O5] cluster. A helical transmembrane segment spans residues 447-471 (RARAAAAGFEKGIDRDFEPVLSMTP).

This sequence belongs to the PsbB/PsbC family. PsbC subfamily. As to quaternary structure, PSII is composed of 1 copy each of membrane proteins PsbA, PsbB, PsbC, PsbD, PsbE, PsbF, PsbH, PsbI, PsbJ, PsbK, PsbL, PsbM, PsbT, PsbX, PsbY, PsbZ, Psb30/Ycf12, at least 3 peripheral proteins of the oxygen-evolving complex and a large number of cofactors. It forms dimeric complexes. It depends on Binds multiple chlorophylls and provides some of the ligands for the Ca-4Mn-5O cluster of the oxygen-evolving complex. It may also provide a ligand for a Cl- that is required for oxygen evolution. PSII binds additional chlorophylls, carotenoids and specific lipids. as a cofactor.

Its subcellular location is the plastid. The protein resides in the chloroplast thylakoid membrane. Its function is as follows. One of the components of the core complex of photosystem II (PSII). It binds chlorophyll and helps catalyze the primary light-induced photochemical processes of PSII. PSII is a light-driven water:plastoquinone oxidoreductase, using light energy to abstract electrons from H(2)O, generating O(2) and a proton gradient subsequently used for ATP formation. The protein is Photosystem II CP43 reaction center protein of Daucus carota (Wild carrot).